The primary structure comprises 586 residues: CTP synthase 2 (586 aa).

The Glutamine amidotransferase type-1 domain occupies 300-554 (SIALVGKYTK…LAATGNLNAY (255 aa)). Active-site for GATase activity residues include Cys-399, His-526, and Glu-528. The disordered stretch occupies residues 564–586 (SDRYSDASDDSFSEPRLAELEIS). Residues Ser-568, Ser-571, and Ser-574 each carry the phosphoserine modification.

It belongs to the CTP synthase family.

The catalysed reaction is UTP + L-glutamine + ATP + H2O = CTP + L-glutamate + ADP + phosphate + 2 H(+). Its pathway is pyrimidine metabolism; CTP biosynthesis via de novo pathway; CTP from UDP: step 2/2. Catalyzes the ATP-dependent amination of UTP to CTP with either L-glutamine or ammonia as the source of nitrogen. Constitutes the rate-limiting enzyme in the synthesis of cytosine nucleotides. This Bos taurus (Bovine) protein is CTP synthase 2 (CTPS2).